Reading from the N-terminus, the 118-residue chain is DNA mimic protein DMP12 (118 aa).

The protein belongs to the DMP12-like protein family. As to quaternary structure, monomer. Interacts with the dimeric form of the DNA-binding protein HU.

Its function is as follows. Acts as a DNA mimic. Interacts with the DNA-binding protein HU and partially prevents the binding of HU protein to DNA by occupying the DNA binding sites on the protein. However, the relatively weak affinity of DMP12 for HU suggests that it may not completely block the HU protein-DNA binding, and that DMP12 is more likely to act as a regulator than a competitive inhibitor. It protects HU protein from limited digestion by trypsin in a limited trypsin digestion assay, suggesting that it may serve to protect the HU protein and improve the stability of unbound HU protein. The chain is DNA mimic protein DMP12 from Neisseria meningitidis serogroup B (strain ATCC BAA-335 / MC58).